The sequence spans 281 residues: MLKIAIPNKGSLSEAAVEILAEAGYAGRGESKTLNVYDKTNDVEFFFLRPKDIAIYVAGGQLDLGITGRDLATDSHANVEEVMSLGFGNSSFRYAAPADQKWTVEMLEGKRIATSYPNLVRDDLQARGINATVIRLDGAVEISIKLGVADAIADVVSTGRTLRKQGLATFGEVICQSEAVIVGQQGNVVDNEQKVFLRRIEGILHAQNYLMLDYNIDRVNLAASEKITPGISGPTVSPLARENWVAVRAMVPRKEANHIMDQLSELGAQAILASEIRIARL.

The protein belongs to the ATP phosphoribosyltransferase family. Long subfamily. Mg(2+) is required as a cofactor.

It is found in the cytoplasm. It carries out the reaction 1-(5-phospho-beta-D-ribosyl)-ATP + diphosphate = 5-phospho-alpha-D-ribose 1-diphosphate + ATP. Its pathway is amino-acid biosynthesis; L-histidine biosynthesis; L-histidine from 5-phospho-alpha-D-ribose 1-diphosphate: step 1/9. Its activity is regulated as follows. Feedback inhibited by histidine. In terms of biological role, catalyzes the condensation of ATP and 5-phosphoribose 1-diphosphate to form N'-(5'-phosphoribosyl)-ATP (PR-ATP). Has a crucial role in the pathway because the rate of histidine biosynthesis seems to be controlled primarily by regulation of HisG enzymatic activity. The polypeptide is ATP phosphoribosyltransferase (Corynebacterium diphtheriae (strain ATCC 700971 / NCTC 13129 / Biotype gravis)).